The following is a 183-amino-acid chain: Intraflagellar transport protein 27 homolog (183 aa).

GTP is bound by residues 12-19 (GAPTVGKT), 63-67 (DVSGQ), and 120-123 (NKSD).

The protein belongs to the small GTPase superfamily. Rab family. As to quaternary structure, component of the IFT complex B.

Its subcellular location is the cell projection. It is found in the cilium. It localises to the flagellum. Its function is as follows. Small GTPase-like component of the intraflagellar transport (IFT) complex B required for both anterograde and retrograde intraflagellar transport. May be involved in cargo loading of the retrograde transport. This chain is Intraflagellar transport protein 27 homolog, found in Trypanosoma brucei brucei (strain 927/4 GUTat10.1).